The chain runs to 675 residues: Protein kintoun (675 aa).

4 disordered regions span residues 98-131, 265-293, 310-340, and 509-659; these read ASKK…KQGA, AGEG…TAPP, EGGA…AVAK, and EAAH…AAPT. A compositionally biased stretch (basic and acidic residues) spans 102 to 113; the sequence is QQQEQEKQEKEQ. The span at 279–293 shows a compositional bias: low complexity; sequence VPGVPDLPGAKTAPP. Positions 529–543 are enriched in low complexity; that stretch reads AAAASSGAAPAPAAA. Residues 544-553 show a composition bias toward acidic residues; the sequence is SEEEEEEDKE. The span at 564–577 shows a compositional bias: low complexity; sequence DPAAAAAAAGASSG. Residues 579-596 are compositionally biased toward basic and acidic residues; the sequence is ELTENERKWRELHARQQQ. 2 stretches are compositionally biased toward low complexity: residues 604 to 617 and 628 to 659; these read AAEA…AAAE and VAQG…AAPT.

The protein belongs to the PIH1 family. Kintoun subfamily.

It localises to the cytoplasm. Required for cytoplasmic pre-assembly of axonemal dyneins, thereby playing a central role in motility in cilia and flagella. Involved in pre-assembly of dynein arm complexes in the cytoplasm before intraflagellar transport loads them for the ciliary compartment. The sequence is that of Protein kintoun (pf13) from Chlamydomonas reinhardtii (Chlamydomonas smithii).